We begin with the raw amino-acid sequence, 153 residues long: Pheromone-binding protein Gp-9 (153 aa).

The first 19 residues, 1 to 19 (MKTFVLHIFIFALVAFASA), serve as a signal peptide directing secretion. 3 disulfide bridges follow: Cys-37–Cys-77, Cys-73–Cys-129, and Cys-118–Cys-138.

This sequence belongs to the PBP/GOBP family. As to quaternary structure, homodimer.

It localises to the secreted. Its function is as follows. Colony queen number, a major feature of social organization, is associated with worker genotype for Gp-9. Colonies are headed by either a single reproductive queen (monogyne form) or multiple queens (polygyne form). Differences in worker Gp-9 genotypes between social forms may cause differences in workers' abilities to recognize queens and regulate their numbers. This is Pheromone-binding protein Gp-9 from Solenopsis interrupta (Fire ant).